Here is a 67-residue protein sequence, read N- to C-terminus: ATP synthase F(0) complex subunit 8 (67 aa).

A helical transmembrane segment spans residues 8-24 (TWFITILSMLITLFILF). K54 carries the N6-acetyllysine; alternate modification. An N6-succinyllysine; alternate modification is found at K54. Position 57 is an N6-acetyllysine (K57).

The protein belongs to the ATPase protein 8 family. As to quaternary structure, component of the ATP synthase complex composed at least of ATP5F1A/subunit alpha, ATP5F1B/subunit beta, ATP5MC1/subunit c (homooctomer), MT-ATP6/subunit a, MT-ATP8/subunit 8, ATP5ME/subunit e, ATP5MF/subunit f, ATP5MG/subunit g, ATP5MK/subunit k, ATP5MJ/subunit j, ATP5F1C/subunit gamma, ATP5F1D/subunit delta, ATP5F1E/subunit epsilon, ATP5PF/subunit F6, ATP5PB/subunit b, ATP5PD/subunit d, ATP5PO/subunit OSCP. ATP synthase complex consists of a soluble F(1) head domain (subunits alpha(3) and beta(3)) - the catalytic core - and a membrane F(0) domain - the membrane proton channel (subunits c, a, 8, e, f, g, k and j). These two domains are linked by a central stalk (subunits gamma, delta, and epsilon) rotating inside the F1 region and a stationary peripheral stalk (subunits F6, b, d, and OSCP). Interacts with PRICKLE3.

It localises to the mitochondrion membrane. Subunit 8, of the mitochondrial membrane ATP synthase complex (F(1)F(0) ATP synthase or Complex V) that produces ATP from ADP in the presence of a proton gradient across the membrane which is generated by electron transport complexes of the respiratory chain. ATP synthase complex consist of a soluble F(1) head domain - the catalytic core - and a membrane F(1) domain - the membrane proton channel. These two domains are linked by a central stalk rotating inside the F(1) region and a stationary peripheral stalk. During catalysis, ATP synthesis in the catalytic domain of F(1) is coupled via a rotary mechanism of the central stalk subunits to proton translocation. In vivo, can only synthesize ATP although its ATP hydrolase activity can be activated artificially in vitro. Part of the complex F(0) domain. In Dugong dugon (Dugong), this protein is ATP synthase F(0) complex subunit 8.